A 118-amino-acid chain; its full sequence is Small ribosomal subunit protein uS13 (118 aa).

Positions 94-118 are disordered; that stretch reads GLPLRGQRTKTNARTRKGPRKPIKK.

This sequence belongs to the universal ribosomal protein uS13 family. In terms of assembly, part of the 30S ribosomal subunit. Forms a loose heterodimer with protein S19. Forms two bridges to the 50S subunit in the 70S ribosome.

Located at the top of the head of the 30S subunit, it contacts several helices of the 16S rRNA. In the 70S ribosome it contacts the 23S rRNA (bridge B1a) and protein L5 of the 50S subunit (bridge B1b), connecting the 2 subunits; these bridges are implicated in subunit movement. Contacts the tRNAs in the A and P-sites. The polypeptide is Small ribosomal subunit protein uS13 (Cellvibrio japonicus (strain Ueda107) (Pseudomonas fluorescens subsp. cellulosa)).